We begin with the raw amino-acid sequence, 266 residues long: Oxidoreductase aflX (266 aa).

It belongs to the avfA family.

The protein operates within mycotoxin biosynthesis; aflatoxin biosynthesis. In terms of biological role, oxidoreductase; part of the gene cluster that mediates the biosynthesis of aflatoxins, a group of polyketide-derived furanocoumarins, and part of the most toxic and carcinogenic compounds among the known mycotoxins. The four major aflatoxins produced by A.parasiticus are aflatoxin B1 (AFB1), aflatoxin B2 (AFB2), aflatoxin G1 (AFG1) and aflatoxin G2 (AFG2). Within the aflatoxin pathway, the oxidoreductase aflX seems to be involved in the conversion of versicolorin A (VERA) to demethylsterigmatocystin (DMST), through probable epoxide ring-opening step following versicolorin A oxidation required for the formation of the xanthone ring. The biosynthesis of aflatoxins begins with the norsolorinic acid synthase aflC that combines a hexanoyl starter unit produced by the fatty acid synthase aflA/aflB and 7 malonyl-CoA extender units to synthesize the precursor NOR. The second step is the conversion of NOR to averantin and requires the norsolorinic acid ketoreductase aflD, which catalyzes the dehydration of norsolorinic acid to form (1'S)-averantin. The norsolorinic acid reductases aflE and aflF may also play a role in the conversion of NOR to AVN. The cytochrome P450 monooxygenase aflG then catalyzes the hydroxylation of AVN to 5'hydroxyaverantin (HAVN). The next step is performed by the 5'-hydroxyaverantin dehydrogenase aflH that transforms HAVN to 5'-oxoaverantin (OAVN) which is further converted to averufin (AVF) by aflK that plays a dual role in the pathway, as a 5'-oxoaverantin cyclase that mediates conversion of 5'-oxoaverantin, as well as a versicolorin B synthase in a later step in the pathway. The averufin oxidase aflI catalyzes the conversion of AVF to versiconal hemiacetal acetate (VHA). VHA is then the substrate for the versiconal hemiacetal acetate esterase aflJ to yield versiconal (VAL). Versicolorin B synthase aflK then converts VAL to versicolorin B (VERB) by closing the bisfuran ring of aflatoxin which is required for DNA-binding, thus giving to aflatoxin its activity as a mutagen. Then, the activity of the versicolorin B desaturase aflL leads to versicolorin A (VERA). A branch point starts from VERB since it can also be converted to dihydrodemethylsterigmatocystin (DMDHST), probably also by aflL, VERA being a precursor for aflatoxins B1 and G1, and DMDHST for aflatoxins B2 and G2. Next, the versicolorin reductase aflM and the cytochrome P450 monooxygenase aflN are involved in conversion of VERA to demethylsterigmatocystin (DMST). AflX and aflY seem also involved in this step, through probable aflX-mediated epoxide ring-opening step following versicolorin A oxidation and aflY-mediated Baeyer-Villiger oxidation required for the formation of the xanthone ring. The methyltransferase aflO then leads to the modification of DMST to sterigmatocystin (ST), and of DMDHST to dihydrosterigmatocystin (DHST). Both ST and DHST are then substrates of the O-methyltransferase aflP to yield O-methylsterigmatocystin (OMST) and dihydro-O-methylsterigmatocystin (DHOMST), respectively. Finally OMST is converted to aflatoxins B1 and G1, and DHOMST to aflatoxins B2 and G2, via the action of several enzymes including O-methylsterigmatocystin oxidoreductase aflQ, the cytochrome P450 monooxygenase aflU, but also the NADH-dependent flavin oxidoreductase nadA which is specifically required for the synthesis of AFG1. This is Oxidoreductase aflX from Aspergillus parasiticus (strain ATCC 56775 / NRRL 5862 / SRRC 143 / SU-1).